Reading from the N-terminus, the 424-residue chain is Dehydrogenase FUM7 (424 aa).

It belongs to the iron-containing alcohol dehydrogenase family. Requires Fe cation as cofactor.

It participates in mycotoxin biosynthesis. Functionally, dehydrogenase; part of the gene cluster that mediates the biosynthesis of fumonisins B1 (FB1), B2 (FB2), B3 (FB3), and B4 (FB4), which are carcinogenic mycotoxins. Within the pathway, FUM7 is involved the addition of the tricarballylic moieties to the carbon backbone. FUM7 dehydrogenase removes the C-3 hydroxyl of citrate to form tricarballylic acid either before or after the CoA activation by the FUM10 acyl-CoA synthetase and FUM14 catalyzed esterification of CoA-activated tricarballylic acid to the C-14 and C-15 hydroxyls of the fumonisin backbone. The biosynthesis starts with the FUM1-catalyzed carbon chain assembly from one molecule of acetyl-CoA, eight molecules of malonyl-CoA, and two molecules of methionine (in S-adenosyl form). The C18 polyketide chain is released from the enzyme by a nucleophilic attack of a carbanion, which is derived from R-carbon of alanine by decarboxylation, on the carbonyl carbon of polyketide acyl chain. This step is catalyzed by the pyridoxal 5'-phosphate-dependent aminoacyl transferase FUM8. The resultant 3-keto intermediate is then stereospecifically reduced to a 3-hydroxyl product by reductase FUM13. Subsequent oxidations at C-10 by the cytochrome P450 monooxygenase FUM2, C-14 and C-15 by FUM6, FUM12 or FUM15, tricarballylic esterification of the hydroxyl groups on C-14 and C-15 by acyltransferase FUM14, and C-5 hydroxylation by 2-keto-glutarate-dependent dioxygenase FUM3 furnish the biosynthesis of fumonisins. The tricarballylic moieties are most likely derived from the citric acid cycle, and their addition to the carbon backbone may involve FUM7, FUM10, FUM11 and FUM14. This chain is Dehydrogenase FUM7, found in Gibberella moniliformis (strain M3125 / FGSC 7600) (Maize ear and stalk rot fungus).